Reading from the N-terminus, the 102-residue chain is Large ribosomal subunit protein uL24 (102 aa).

The protein belongs to the universal ribosomal protein uL24 family. Part of the 50S ribosomal subunit.

Functionally, one of two assembly initiator proteins, it binds directly to the 5'-end of the 23S rRNA, where it nucleates assembly of the 50S subunit. Its function is as follows. One of the proteins that surrounds the polypeptide exit tunnel on the outside of the subunit. The sequence is that of Large ribosomal subunit protein uL24 from Rhizobium rhizogenes (strain K84 / ATCC BAA-868) (Agrobacterium radiobacter).